The chain runs to 151 residues: uncharacterized protein (151 aa).

One can recognise an N-acetyltransferase domain in the interval 3–151; sequence IKIDDLTGRQ…PNSVFMTKKL (149 aa).

This sequence belongs to the acetyltransferase family.

This is an uncharacterized protein from Bacillus subtilis (strain 168).